A 369-amino-acid polypeptide reads, in one-letter code: Anhydro-N-acetylmuramic acid kinase (369 aa).

12–19 (GTSLDGVD) is a binding site for ATP.

This sequence belongs to the anhydro-N-acetylmuramic acid kinase family.

It carries out the reaction 1,6-anhydro-N-acetyl-beta-muramate + ATP + H2O = N-acetyl-D-muramate 6-phosphate + ADP + H(+). It participates in amino-sugar metabolism; 1,6-anhydro-N-acetylmuramate degradation. Its pathway is cell wall biogenesis; peptidoglycan recycling. Catalyzes the specific phosphorylation of 1,6-anhydro-N-acetylmuramic acid (anhMurNAc) with the simultaneous cleavage of the 1,6-anhydro ring, generating MurNAc-6-P. Is required for the utilization of anhMurNAc either imported from the medium or derived from its own cell wall murein, and thus plays a role in cell wall recycling. In Shigella flexneri, this protein is Anhydro-N-acetylmuramic acid kinase.